Consider the following 867-residue polypeptide: Cadherin-related family member 1 (867 aa).

The signal sequence occupies residues 1-21 (MKHEWNLCPSIFFSIFHICLS). Residues 22–707 (VQTNYGPYFF…SKDNPMKALG (686 aa)) lie on the Extracellular side of the membrane. Cadherin domains are found at residues 39-138 (NGNM…SPGF), 139-250 (LNTP…PPVF), 251-357 (VGTP…PPTF), 363-476 (PQNR…VPRF), 477-580 (SSEY…SPEF), and 572-692 (DIND…GPMA). Residues 708–728 (VLAGVMAIMVVITIFISTAMF) form a helical membrane-spanning segment. Residues 729 to 867 (WRNKKSNRVM…KNAGSSMSFY (139 aa)) are Cytoplasmic-facing. The tract at residues 777–825 (EMESGPKNENRNNNYQGIPVPPRAPCPPPPPRLMPKVSKTERSLPTVSG) is disordered. The segment covering 795 to 809 (PVPPRAPCPPPPPRL) has biased composition (pro residues).

In terms of tissue distribution, expressed in photoreceptor cells of the outer nuclear layer of the retina and in the pinal gland.

The protein resides in the membrane. Functionally, potential calcium-dependent cell-adhesion protein. This is Cadherin-related family member 1 (cdhr1) from Xenopus laevis (African clawed frog).